Consider the following 465-residue polypeptide: MNNKLEQFKKDVKNKRVAVMGIGVSNIPLIKYLVSFGVDVTAFDKSTEEKLTDAFNELKGLPVKYSLGPDYLSRLNGFDMIFRTPGMRPDLPELVEAVANGAELTSEMEVFLKLCPAQVFAVTGSDGKTTTTTLIYKTLSEEGFKCWLGGNIGTPLLSKIDDVAETDKVILELSSFQLMTIKDCPSVAVITNISPNHLDVHKSLQEYIDAKKNIFINQNENDKLVLNFDNEITKSFNYEARGEYVYFSRLNNINEGVVYQNGRIIVKKENSITEIIEGDKIKIPGVHNIENYMAATAATIDYVKPETIARIASSFNGVEHRIELVRELNGVKFYNSSIDSSPSRTIAALKTFKDKVILIAGGKDKGIPYDSMGEIITEKVKCLLLIGATASRIEEAYKNYLQQRDLENDIKIIHCDTYQEVVQKAHAEAEQGDCIILSPASTSFDMFKNFEHRGNVFKELVNNLK.

An ATP-binding site is contributed by Gly124–Thr130.

The protein belongs to the MurCDEF family.

The protein resides in the cytoplasm. It carries out the reaction UDP-N-acetyl-alpha-D-muramoyl-L-alanine + D-glutamate + ATP = UDP-N-acetyl-alpha-D-muramoyl-L-alanyl-D-glutamate + ADP + phosphate + H(+). Its pathway is cell wall biogenesis; peptidoglycan biosynthesis. Cell wall formation. Catalyzes the addition of glutamate to the nucleotide precursor UDP-N-acetylmuramoyl-L-alanine (UMA). The polypeptide is UDP-N-acetylmuramoylalanine--D-glutamate ligase (Ruminiclostridium cellulolyticum (strain ATCC 35319 / DSM 5812 / JCM 6584 / H10) (Clostridium cellulolyticum)).